The chain runs to 253 residues: 5'/3'-nucleotidase SurE (253 aa).

A divalent metal cation-binding residues include Asp-8, Asp-9, Ser-39, and Asn-92.

Belongs to the SurE nucleotidase family. A divalent metal cation serves as cofactor.

The protein resides in the cytoplasm. It catalyses the reaction a ribonucleoside 5'-phosphate + H2O = a ribonucleoside + phosphate. The enzyme catalyses a ribonucleoside 3'-phosphate + H2O = a ribonucleoside + phosphate. It carries out the reaction [phosphate](n) + H2O = [phosphate](n-1) + phosphate + H(+). Functionally, nucleotidase with a broad substrate specificity as it can dephosphorylate various ribo- and deoxyribonucleoside 5'-monophosphates and ribonucleoside 3'-monophosphates with highest affinity to 3'-AMP. Also hydrolyzes polyphosphate (exopolyphosphatase activity) with the preference for short-chain-length substrates (P20-25). Might be involved in the regulation of dNTP and NTP pools, and in the turnover of 3'-mononucleotides produced by numerous intracellular RNases (T1, T2, and F) during the degradation of various RNAs. This is 5'/3'-nucleotidase SurE from Cronobacter sakazakii (strain ATCC BAA-894) (Enterobacter sakazakii).